The following is a 1121-amino-acid chain: CRISPR-associated endonuclease Cas9 1 (1121 aa).

D9 acts as the For RuvC-like nuclease domain in catalysis. Residues D9, E509, and E513 each coordinate Mg(2+). Positions 516–684 (EDDEKKAIQK…VRKKFIERNL (169 aa)) constitute an HNH Cas9-type domain. H599 acts as the Proton acceptor for HNH nuclease domain in catalysis. H738 contributes to the Mg(2+) binding site.

Belongs to the CRISPR-associated protein Cas9 family. Subtype II-A subfamily. Monomer. Binds crRNA and tracrRNA. Mg(2+) is required as a cofactor.

Functionally, CRISPR (clustered regularly interspaced short palindromic repeat) is an adaptive immune system that provides protection against mobile genetic elements (viruses, transposable elements and conjugative plasmids). CRISPR clusters contain spacers, sequences complementary to antecedent mobile elements, and target invading nucleic acids. CRISPR clusters are transcribed and processed into CRISPR RNA (crRNA). In type II CRISPR systems correct processing of pre-crRNA requires a trans-encoded small RNA (tracrRNA), endogenous ribonuclease 3 (rnc) and this protein. The tracrRNA serves as a guide for ribonuclease 3-aided processing of pre-crRNA. Subsequently Cas9/crRNA/tracrRNA endonucleolytically cleaves linear or circular dsDNA target complementary to the spacer; Cas9 is inactive in the absence of the 2 guide RNAs (gRNA). Cas9 recognizes the protospacer adjacent motif (PAM) in the CRISPR repeat sequences to help distinguish self versus nonself, as targets within the bacterial CRISPR locus do not have PAMs. PAM recognition is also required for catalytic activity. Cuts target DNA when Cas9 and gRNAs are mixed. The chain is CRISPR-associated endonuclease Cas9 1 from Streptococcus thermophilus (strain ATCC BAA-491 / LMD-9).